The chain runs to 277 residues: Large ribosomal subunit protein uL2 (277 aa).

The disordered stretch occupies residues 225–277; the sequence is MNPVDHPHGGGEGKTSGGRNSVTPWGVPTKGKKTRKRGKHSDKYIKVSSVRKR. A compositionally biased stretch (basic residues) spans 254–264; it reads KGKKTRKRGKH.

The protein belongs to the universal ribosomal protein uL2 family. As to quaternary structure, part of the 50S ribosomal subunit. Forms a bridge to the 30S subunit in the 70S ribosome.

One of the primary rRNA binding proteins. Required for association of the 30S and 50S subunits to form the 70S ribosome, for tRNA binding and peptide bond formation. It has been suggested to have peptidyltransferase activity; this is somewhat controversial. Makes several contacts with the 16S rRNA in the 70S ribosome. This chain is Large ribosomal subunit protein uL2, found in Anaplasma marginale (strain Florida).